A 400-amino-acid chain; its full sequence is Proline-rich protein 5 (400 aa).

The disordered stretch occupies residues 301–358 (TDSTSKLSMAGTKPPGEGERPPISNGQFPPLHNLSDSQQGLYNSQRDSPLLPAPSSSP). Residues 334–347 (LSDSQQGLYNSQRD) are compositionally biased toward polar residues. Residues 348–358 (SPLLPAPSSSP) show a composition bias toward low complexity.

The protein belongs to the PROTOR family. As to quaternary structure, associated component of the mechanistic target of rapamycin complex 2 (mTORC2).

Its function is as follows. Associated subunit of mTORC2, which regulates cell growth and survival in response to hormonal signals. This Xenopus laevis (African clawed frog) protein is Proline-rich protein 5 (prr5).